The sequence spans 353 residues: Paraneoplastic antigen Ma1 homolog (353 aa).

This sequence belongs to the PNMA family. Testis and brain specific.

The protein resides in the nucleus. It localises to the nucleolus. This is Paraneoplastic antigen Ma1 homolog (Pnma1) from Rattus norvegicus (Rat).